A 552-amino-acid polypeptide reads, in one-letter code: Pyrophosphate--fructose 6-phosphate 1-phosphotransferase subunit beta (552 aa).

G90 provides a ligand contact to diphosphate. D184 lines the Mg(2+) pocket. Residues 212–214 (TID), 251–252 (KY), 259–261 (MGR), E320, and 425–428 (YEGR) each bind substrate. Residue D214 is the Proton acceptor of the active site.

The protein belongs to the phosphofructokinase type A (PFKA) family. PPi-dependent PFK group II subfamily. Clade 'Long' sub-subfamily. Tetramer of two alpha (regulatory) and two beta (catalytic) chains. It depends on Mg(2+) as a cofactor.

It is found in the cytoplasm. The enzyme catalyses beta-D-fructose 6-phosphate + diphosphate = beta-D-fructose 1,6-bisphosphate + phosphate + H(+). It participates in carbohydrate degradation; glycolysis; D-glyceraldehyde 3-phosphate and glycerone phosphate from D-glucose: step 3/4. Its activity is regulated as follows. Allosterically activated by fructose 2,6-bisphosphate. Its function is as follows. Catalytic subunit of pyrophosphate--fructose 6-phosphate 1-phosphotransferase. Catalyzes the phosphorylation of D-fructose 6-phosphate, the first committing step of glycolysis. Uses inorganic phosphate (PPi) as phosphoryl donor instead of ATP like common ATP-dependent phosphofructokinases (ATP-PFKs), which renders the reaction reversible, and can thus function both in glycolysis and gluconeogenesis. The protein is Pyrophosphate--fructose 6-phosphate 1-phosphotransferase subunit beta of Ricinus communis (Castor bean).